The following is a 449-amino-acid chain: Tubulin alpha-8 chain (449 aa).

The MREC motif signature appears at 1-4 (MREC). The GTP site is built by Gln11, Glu71, Ser140, Gly144, Thr145, Thr179, Asn206, and Asn228. Residue Glu71 coordinates Mg(2+). Glu254 is an active-site residue.

It belongs to the tubulin family. As to quaternary structure, dimer of alpha and beta chains. A typical microtubule is a hollow water-filled tube with an outer diameter of 25 nm and an inner diameter of 15 nM. Alpha-beta heterodimers associate head-to-tail to form protofilaments running lengthwise along the microtubule wall with the beta-tubulin subunit facing the microtubule plus end conferring a structural polarity. Microtubules usually have 13 protofilaments but different protofilament numbers can be found in some organisms and specialized cells. Mg(2+) is required as a cofactor. In terms of processing, some glutamate residues at the C-terminus are polyglycylated, resulting in polyglycine chains on the gamma-carboxyl group. Glycylation is mainly limited to tubulin incorporated into axonemes (cilia and flagella) whereas glutamylation is prevalent in neuronal cells, centrioles, axonemes, and the mitotic spindle. Both modifications can coexist on the same protein on adjacent residues, and lowering polyglycylation levels increases polyglutamylation, and reciprocally. Cilia and flagella glycylation is required for their stability and maintenance. Flagella glycylation controls sperm motility. Post-translationally, some glutamate residues at the C-terminus are polyglutamylated, resulting in polyglutamate chains on the gamma-carboxyl group. Polyglutamylation plays a key role in microtubule severing by spastin (SPAST). SPAST preferentially recognizes and acts on microtubules decorated with short polyglutamate tails: severing activity by SPAST increases as the number of glutamates per tubulin rises from one to eight, but decreases beyond this glutamylation threshold. Glutamylation is also involved in cilia motility. The C-terminal phenylalanine residue is cleaved by MATCAP1/KIAA0895L.

It localises to the cytoplasm. The protein localises to the cytoskeleton. It carries out the reaction GTP + H2O = GDP + phosphate + H(+). Tubulin is the major constituent of microtubules, a cylinder consisting of laterally associated linear protofilaments composed of alpha- and beta-tubulin heterodimers. Microtubules grow by the addition of GTP-tubulin dimers to the microtubule end, where a stabilizing cap forms. Below the cap, tubulin dimers are in GDP-bound state, owing to GTPase activity of alpha-tubulin. This Rattus norvegicus (Rat) protein is Tubulin alpha-8 chain (Tuba8).